A 203-amino-acid polypeptide reads, in one-letter code: LexA repressor (203 aa).

A DNA-binding region (H-T-H motif) is located at residues 28-48 (RAEIASQLGFRSPNAAEEHLK). Active-site for autocatalytic cleavage activity residues include serine 120 and lysine 157.

Belongs to the peptidase S24 family. In terms of assembly, homodimer.

It carries out the reaction Hydrolysis of Ala-|-Gly bond in repressor LexA.. In terms of biological role, represses a number of genes involved in the response to DNA damage (SOS response), including recA and lexA. Binds to the 16 bp palindromic sequence 5'-CTGTATATATATACAG-3'. In the presence of single-stranded DNA, RecA interacts with LexA causing an autocatalytic cleavage which disrupts the DNA-binding part of LexA, leading to derepression of the SOS regulon and eventually DNA repair. The polypeptide is LexA repressor (Proteus mirabilis (strain HI4320)).